Here is a 221-residue protein sequence, read N- to C-terminus: Probable lipoprotein CT_734 (221 aa).

The N-terminal stretch at 1-24 (MKKFIYKYSFGALLLLSGLSGLSS) is a signal peptide. Cys25 is lipidated: N-palmitoyl cysteine. Cys25 is lipidated: S-diacylglycerol cysteine.

It belongs to the chlamydial CPn_0875/CT_734/TC_0107 family.

The protein resides in the cell membrane. The sequence is that of Probable lipoprotein CT_734 from Chlamydia trachomatis serovar D (strain ATCC VR-885 / DSM 19411 / UW-3/Cx).